We begin with the raw amino-acid sequence, 190 residues long: Crossover junction endodeoxyribonuclease RuvC (190 aa).

Residues D8, E67, and D139 contribute to the active site. Mg(2+) contacts are provided by D8, E67, and D139.

Belongs to the RuvC family. As to quaternary structure, homodimer which binds Holliday junction (HJ) DNA. The HJ becomes 2-fold symmetrical on binding to RuvC with unstacked arms; it has a different conformation from HJ DNA in complex with RuvA. In the full resolvosome a probable DNA-RuvA(4)-RuvB(12)-RuvC(2) complex forms which resolves the HJ. It depends on Mg(2+) as a cofactor.

The protein resides in the cytoplasm. It catalyses the reaction Endonucleolytic cleavage at a junction such as a reciprocal single-stranded crossover between two homologous DNA duplexes (Holliday junction).. Functionally, the RuvA-RuvB-RuvC complex processes Holliday junction (HJ) DNA during genetic recombination and DNA repair. Endonuclease that resolves HJ intermediates. Cleaves cruciform DNA by making single-stranded nicks across the HJ at symmetrical positions within the homologous arms, yielding a 5'-phosphate and a 3'-hydroxyl group; requires a central core of homology in the junction. The consensus cleavage sequence is 5'-(A/T)TT(C/G)-3'. Cleavage occurs on the 3'-side of the TT dinucleotide at the point of strand exchange. HJ branch migration catalyzed by RuvA-RuvB allows RuvC to scan DNA until it finds its consensus sequence, where it cleaves and resolves the cruciform DNA. This Haemophilus influenzae (strain ATCC 51907 / DSM 11121 / KW20 / Rd) protein is Crossover junction endodeoxyribonuclease RuvC.